The following is a 1426-amino-acid chain: ABC transporter G family member 31 (1426 aa).

Residues Asn6 and Asn150 are each glycosylated (N-linked (GlcNAc...) asparagine). The ABC transporter 1 domain occupies Leu160–Pro434. Residue Gly193 to Ser200 coordinates ATP. An N-linked (GlcNAc...) asparagine glycan is attached at Asn219. Thr276 carries the post-translational modification Phosphothreonine. In terms of domain architecture, ABC transmembrane type-2 1 spans Glu512–Phe725. The next 6 helical transmembrane spans lie at Phe530–Phe550, Cys569–Ile589, Val618–Leu638, Met649–Leu669, Ile675–Ile695, and Ile760–Leu780. One can recognise an ABC transporter 2 domain in the interval Met826–Asn1078. N-linked (GlcNAc...) asparagine glycosylation occurs at Asn856. Position 871–878 (Gly871–Thr878) interacts with ATP. The 215-residue stretch at Ser1151–Leu1365 folds into the ABC transmembrane type-2 2 domain. 7 helical membrane-spanning segments follow: residues Leu1172–Ile1192, Leu1202–Ser1222, Ile1258–Phe1278, Phe1285–Met1305, Leu1315–Val1335, Val1342–Leu1362, and Ile1396–Leu1416.

The protein belongs to the ABC transporter superfamily. ABCG family. PDR (TC 3.A.1.205) subfamily. Expressed in seedlings, stems, leaves, siliques and inflorescence. In seeds, confined to the endosperm. Highly expressed in the tapetum of anthers.

It is found in the cell membrane. It catalyses the reaction abscisate(in) + ATP + H2O = abscisate(out) + ADP + phosphate + H(+). Together with ABCG25, export abscisic acid (ABA) from the endosperm to deliver it to the embryo via ABCG30 and ABCG40-mediated import to suppress radicle extension and subsequent embryonic growth. Together with ABCG9, involved in pollen coat deposition of steryl glycosides required for pollen fitness. May be a general defense protein. This Arabidopsis thaliana (Mouse-ear cress) protein is ABC transporter G family member 31.